We begin with the raw amino-acid sequence, 466 residues long: Adenosylhomocysteinase (466 aa).

Substrate is bound by residues Thr-57, Asp-132, and Glu-192. 193-195 (TTT) contributes to the NAD(+) binding site. Lys-222 and Asp-226 together coordinate substrate. NAD(+) contacts are provided by residues Asn-227, 256-261 (GYGDVG), Glu-279, Asn-314, 335-337 (IGH), and Asn-380.

This sequence belongs to the adenosylhomocysteinase family. Requires NAD(+) as cofactor.

The protein resides in the cytoplasm. It catalyses the reaction S-adenosyl-L-homocysteine + H2O = L-homocysteine + adenosine. It functions in the pathway amino-acid biosynthesis; L-homocysteine biosynthesis; L-homocysteine from S-adenosyl-L-homocysteine: step 1/1. Its function is as follows. May play a key role in the regulation of the intracellular concentration of adenosylhomocysteine. This is Adenosylhomocysteinase from Brucella anthropi (strain ATCC 49188 / DSM 6882 / CCUG 24695 / JCM 21032 / LMG 3331 / NBRC 15819 / NCTC 12168 / Alc 37) (Ochrobactrum anthropi).